Here is a 505-residue protein sequence, read N- to C-terminus: Protein disulfide-isomerase A3 (505 aa).

Residues 1–24 (MRFSCLALLPGVALLLASALLASA) form the signal peptide. The Thioredoxin 1 domain maps to 25-133 (SDVLELTDEN…IVSHLKKQAG (109 aa)). Residues cysteine 57 and cysteine 60 each act as nucleophile in the active site. An intrachain disulfide couples cysteine 57 to cysteine 60. At lysine 61 the chain carries N6-methyllysine. Cysteines 85 and 92 form a disulfide. Residue lysine 129 is modified to N6-succinyllysine. Lysine 152 is subject to N6-acetyllysine. Lysine 218 is subject to N6-succinyllysine. Lysine 252 is modified (N6-acetyllysine). Position 319 is a phosphothreonine (threonine 319). In terms of domain architecture, Thioredoxin 2 spans 343-485 (SRDGKALERF…FISYLQREAT (143 aa)). Lysine 362 carries the post-translational modification N6-acetyllysine. Catalysis depends on nucleophile residues cysteine 406 and cysteine 409. Cysteine 406 and cysteine 409 are oxidised to a cystine. The segment at 484 to 505 (ATNPPIIQEEKPKKKKKAQEDL) is disordered. Basic and acidic residues predominate over residues 491–505 (QEEKPKKKKKAQEDL). Lysine 494 is modified (N6-acetyllysine). The short motif at 502-505 (QEDL) is the Prevents secretion from ER element.

The protein belongs to the protein disulfide isomerase family. In terms of assembly, part of the major histocompatibility complex class I (MHC I) peptide loading complex composed of TAP1, TAP2, B2M, MHC heavy chain, TAPBP, PDIA3, and CALR. Interacts with ERP27 and CANX. Interacts with SERPINA2 and with SERPINA1. Interacts with ATP2A2. Post-translationally, within the major histocompatibility complex class I (MHC I) peptide loading complex forms reversible disulfide-linked heterodimers with TAPBP as part of its protein folding chaperone activity. This is essential to assist the dynamic assembly of the MHC I complex with high affinity antigens in the endoplasmic reticulum. Phosphorylated. As to expression, in caput epididymal spermatozoa, detected in the head, mid and principal pieces. In cauda epididymal spermatozoa detected only in the acrosome (at protein level).

Its subcellular location is the endoplasmic reticulum. The protein localises to the endoplasmic reticulum lumen. It localises to the melanosome. It catalyses the reaction Catalyzes the rearrangement of -S-S- bonds in proteins.. Seems to be inhibited by acidic phospholipids. In terms of biological role, protein disulfide isomerase that catalyzes the formation, isomerization, and reduction or oxidation of disulfide bonds in client proteins and functions as a protein folding chaperone. Core component of the major histocompatibility complex class I (MHC I) peptide loading complex where it functions as an essential folding chaperone for TAPBP. Through TAPBP, assists the dynamic assembly of the MHC I complex with high affinity antigens in the endoplasmic reticulum. Therefore, plays a crucial role in the presentation of antigens to cytotoxic T cells in adaptive immunity. This chain is Protein disulfide-isomerase A3 (Pdia3), found in Rattus norvegicus (Rat).